Consider the following 335-residue polypeptide: Ferrochelatase (335 aa).

2 residues coordinate Fe cation: His-192 and Glu-291.

Belongs to the ferrochelatase family.

The protein resides in the cytoplasm. It catalyses the reaction heme b + 2 H(+) = protoporphyrin IX + Fe(2+). The protein operates within porphyrin-containing compound metabolism; protoheme biosynthesis; protoheme from protoporphyrin-IX: step 1/1. Catalyzes the ferrous insertion into protoporphyrin IX. The polypeptide is Ferrochelatase (Bdellovibrio bacteriovorus (strain ATCC 15356 / DSM 50701 / NCIMB 9529 / HD100)).